The chain runs to 303 residues: Probable acetylxylan esterase A (303 aa).

A signal peptide spans 1–23 (MLSTHLLFLATTLLTSLFHPIAA). The active-site Charge relay system is the Ser-147. N-linked (GlcNAc...) asparagine glycosylation occurs at Asn-189.

This sequence belongs to the carbohydrate esterase 1 (CE1) family. AxeA subfamily. Monomer.

It localises to the secreted. The catalysed reaction is Deacetylation of xylans and xylo-oligosaccharides.. Its pathway is glycan degradation; xylan degradation. Its function is as follows. Acetylxylan esterase involved in the hydrolysis of xylan, a major structural heterogeneous polysaccharide found in plant biomass representing the second most abundant polysaccharide in the biosphere, after cellulose. Degrades acetylated xylans by cleaving acetyl side groups from the hetero-xylan backbone. This is Probable acetylxylan esterase A (axeA) from Aspergillus niger (strain ATCC MYA-4892 / CBS 513.88 / FGSC A1513).